A 266-amino-acid polypeptide reads, in one-letter code: Small ribosomal subunit protein eS1 (266 aa).

The disordered stretch occupies residues 235 to 266 (GGAGGAAKASGDDTGAKVERADGYEPPIQETV). A compositionally biased stretch (basic and acidic residues) spans 244 to 257 (SGDDTGAKVERADG).

It belongs to the eukaryotic ribosomal protein eS1 family. In terms of assembly, component of the small ribosomal subunit. Mature ribosomes consist of a small (40S) and a large (60S) subunit. The 40S subunit contains about 33 different proteins and 1 molecule of RNA (18S). The 60S subunit contains about 49 different proteins and 3 molecules of RNA (28S, 5.8S and 5S).

It is found in the cytoplasm. Functionally, component of the small ribosomal subunit. The ribosome is a large ribonucleoprotein complex responsible for the synthesis of proteins in the cell. This chain is Small ribosomal subunit protein eS1 (rps3a), found in Oryzias latipes (Japanese rice fish).